Here is a 78-residue protein sequence, read N- to C-terminus: Acyl carrier protein (78 aa).

The 76-residue stretch at 2 to 77 (STIEESVKSI…AAIDFIKESK (76 aa)) folds into the Carrier domain. The residue at position 37 (serine 37) is an O-(pantetheine 4'-phosphoryl)serine.

It belongs to the acyl carrier protein (ACP) family. Post-translationally, 4'-phosphopantetheine is transferred from CoA to a specific serine of apo-ACP by AcpS. This modification is essential for activity because fatty acids are bound in thioester linkage to the sulfhydryl of the prosthetic group.

It localises to the cytoplasm. It functions in the pathway lipid metabolism; fatty acid biosynthesis. Its function is as follows. Carrier of the growing fatty acid chain in fatty acid biosynthesis. The polypeptide is Acyl carrier protein (Wigglesworthia glossinidia brevipalpis).